A 118-amino-acid chain; its full sequence is Large ribosomal subunit protein bL20 (118 aa).

This sequence belongs to the bacterial ribosomal protein bL20 family.

In terms of biological role, binds directly to 23S ribosomal RNA and is necessary for the in vitro assembly process of the 50S ribosomal subunit. It is not involved in the protein synthesizing functions of that subunit. This Nostoc punctiforme (strain ATCC 29133 / PCC 73102) protein is Large ribosomal subunit protein bL20.